The sequence spans 180 residues: GTP cyclohydrolase 1 (180 aa).

Zn(2+)-binding residues include Cys71, His74, and Cys142.

The protein belongs to the GTP cyclohydrolase I family. In terms of assembly, toroid-shaped homodecamer, composed of two pentamers of five dimers.

The enzyme catalyses GTP + H2O = 7,8-dihydroneopterin 3'-triphosphate + formate + H(+). Its pathway is cofactor biosynthesis; 7,8-dihydroneopterin triphosphate biosynthesis; 7,8-dihydroneopterin triphosphate from GTP: step 1/1. The protein is GTP cyclohydrolase 1 (folE) of Helicobacter pylori (strain J99 / ATCC 700824) (Campylobacter pylori J99).